The following is a 570-amino-acid chain: RNA polymerase I termination factor (570 aa).

Over residues 1–16 (MDSVSNLKSTNFQNNN) the composition is skewed to polar residues. Disordered stretches follow at residues 1 to 21 (MDSVSNLKSTNFQNNNDPKES), 37 to 68 (HIKKTKKKLKKQKKRKHGSKMSHEDEDTDMDW), and 100 to 138 (SSMREKDKRSCHKKSSNSRSERKKHRKRKSSKERKAKIK). Basic residues predominate over residues 37-56 (HIKKTKKKLKKQKKRKHGSK). Phosphothreonine is present on Thr64. Basic residues predominate over residues 108 to 137 (RSCHKKSSNSRSERKKHRKRKSSKERKAKI). A Myb-like 1 domain is found at 273 to 339 (KFTPSEENAL…SIYKHIRRKY (67 aa)). Residues 340 to 391 (HIFEQRGKWTPEEDQELARLCLEKEGHWTEVGKLLGRMPEDCRDRWRNYMKC) form the HTH myb-type domain. The H-T-H motif DNA-binding region spans 367-389 (WTEVGKLLGRMPEDCRDRWRNYM). Myb-like domains are found at residues 392 to 486 (GSKR…NKLV) and 493 to 549 (SMLS…MREK).

As to quaternary structure, interacts with FOB1. Interacts with the RENT complex subunits NET1 and SIR2.

Its subcellular location is the nucleus. It is found in the nucleolus. Its function is as follows. DNA-binding protein that recognizes sequence-specific replication termini (Ter sites) within rDNA. Binds to rDNA terminator elements and mediates efficient RNA polymerase I transcription termination. Required for rDNA silencing at the non-transcribed spacer 1 (NTS1). Promotes the association of SIR2 with NTS1 and contributes to maintenance of rDNA stability. The sequence is that of RNA polymerase I termination factor from Saccharomyces cerevisiae (strain ATCC 204508 / S288c) (Baker's yeast).